We begin with the raw amino-acid sequence, 241 residues long: Nickel import ATP-binding protein LarO (241 aa).

Positions 2–240 constitute an ABC transporter domain; sequence IKLVNICYDY…QPARQAQLMT (239 aa). 34–41 is a binding site for ATP; it reads GPNGSGKS.

It belongs to the ABC transporter superfamily. In terms of assembly, may form an energy-coupling factor (ECF) transporter complex composed of an ATP-binding protein (A component, LarO), a transmembrane protein (T component, LarQ) and a fused possible substrate-capture protein (S component, LarMN) of unknown stoichiometry.

The protein resides in the cell membrane. Functionally, probable ATP-binding component of the energy-coupling factor (ECF) transporter complex LarMNQO involved in nickel import. LarO is presumably responsible for energy coupling to the transport system. In Lactiplantibacillus plantarum (strain ATCC BAA-793 / NCIMB 8826 / WCFS1) (Lactobacillus plantarum), this protein is Nickel import ATP-binding protein LarO.